We begin with the raw amino-acid sequence, 468 residues long: Cysteine--tRNA ligase (468 aa).

Residue cysteine 29 coordinates Zn(2+). Residues 31 to 41 carry the 'HIGH' region motif; that stretch reads PTVYNYIHIGN. Positions 209, 234, and 238 each coordinate Zn(2+). A 'KMSKS' region motif is present at residues 266–270; it reads KMSKS. Lysine 269 contributes to the ATP binding site. Serine 270 carries the phosphoserine modification.

It belongs to the class-I aminoacyl-tRNA synthetase family. In terms of assembly, monomer. The cofactor is Zn(2+).

The protein localises to the cytoplasm. It catalyses the reaction tRNA(Cys) + L-cysteine + ATP = L-cysteinyl-tRNA(Cys) + AMP + diphosphate. This chain is Cysteine--tRNA ligase, found in Oceanobacillus iheyensis (strain DSM 14371 / CIP 107618 / JCM 11309 / KCTC 3954 / HTE831).